We begin with the raw amino-acid sequence, 124 residues long: uncharacterized protein (124 aa).

This is an uncharacterized protein from Schizosaccharomyces pombe (strain 972 / ATCC 24843) (Fission yeast).